A 957-amino-acid chain; its full sequence is Vacuolar membrane protease (957 aa).

Topologically, residues 1-10 are cytoplasmic; sequence MARYNPFSFT. The helical transmembrane segment at 11–31 threads the bilayer; that stretch reads PGPVVFFTTVIYVGLFAALLV. At 32–369 the chain is on the vacuolar side; the sequence is THLTVPDYPS…RVFVVFQLHT (338 aa). 3 N-linked (GlcNAc...) asparagine glycosylation sites follow: N48, N105, and N136. Zn(2+)-binding residues include H152 and D164. E198 serves as the catalytic Proton acceptor. The Zn(2+) site is built by E199, E224, and H297. A helical transmembrane segment spans residues 370-390; the sequence is LFALCVTLLVVAPITLIGLTF. At 391-423 the chain is on the cytoplasmic side; the sequence is GLSKADKNYLLARKAFVYSSDDDNPVQLYGWRG. The chain crosses the membrane as a helical span at residues 424-444; the sequence is FFRFPIIFISATAVVVALAYL. Residues 445–450 lie on the Vacuolar side of the membrane; the sequence is LVRFNA. Residues 451–471 form a helical membrane-spanning segment; sequence FIIYSSPFAVWSMMLSAWFFV. The Cytoplasmic portion of the chain corresponds to 472–490; sequence AWFFSRGADAMRPSALQRM. Residues 491 to 511 traverse the membrane as a helical segment; that stretch reads YALIWLFIGSFVLLTIVTVFV. Residues 512–521 lie on the Vacuolar side of the membrane; it reads NNYQVVAGYP. The chain crosses the membrane as a helical span at residues 522 to 542; that stretch reads ALFYFAVVFVAIMLSYLELFF. At 543–642 the chain is on the cytoplasmic side; it reads APTKSAYARH…YPGEQEWSGK (100 aa). Disordered regions lie at residues 559–586 and 603–627; these read SRRN…PVAD and FTRY…SQRL. Basic and acidic residues predominate over residues 603–613; it reads FTRYGSRRDSA. The chain crosses the membrane as a helical span at residues 643–663; that stretch reads LPSWIWIIQLLLLAPLVIVLV. Topologically, residues 664 to 685 are vacuolar; that stretch reads GQVALLLTSALYQTPSDGNSPL. Residues 686 to 706 traverse the membrane as a helical segment; sequence FIYLAIAALSVLLLAPTGPFI. Topologically, residues 707 to 713 are cytoplasmic; it reads HRFTYHV. A helical membrane pass occupies residues 714 to 734; that stretch reads PTFLFLVCLGTVIYNLVAFPF. Residues 735–957 are Vacuolar-facing; the sequence is SRDHRLKVYF…LVEGFKRFEI (223 aa). N-linked (GlcNAc...) asparagine glycosylation is found at N782, N818, and N834.

Belongs to the peptidase M28 family. The cofactor is Zn(2+).

The protein localises to the vacuole membrane. May be involved in vacuolar sorting and osmoregulation. In Pyrenophora teres f. teres (strain 0-1) (Barley net blotch fungus), this protein is Vacuolar membrane protease.